A 255-amino-acid polypeptide reads, in one-letter code: Hydroxyacylglutathione hydrolase (255 aa).

Positions 56, 58, 60, 61, 114, 133, and 171 each coordinate Zn(2+).

The protein belongs to the metallo-beta-lactamase superfamily. Glyoxalase II family. Monomer. The cofactor is Zn(2+).

The enzyme catalyses an S-(2-hydroxyacyl)glutathione + H2O = a 2-hydroxy carboxylate + glutathione + H(+). It participates in secondary metabolite metabolism; methylglyoxal degradation; (R)-lactate from methylglyoxal: step 2/2. In terms of biological role, thiolesterase that catalyzes the hydrolysis of S-D-lactoyl-glutathione to form glutathione and D-lactic acid. This chain is Hydroxyacylglutathione hydrolase, found in Rhodopseudomonas palustris (strain BisB5).